We begin with the raw amino-acid sequence, 269 residues long: Transmembrane protein 41B (269 aa).

A run of 6 helical transmembrane segments spans residues 30-50, 87-107, 125-147, 175-195, 203-223, and 240-260; these read TSLL…FLVY, FYVQ…TFAI, LALF…LSYL, LINY…FINI, PLKV…FVAI, and SWNS…PALF. A VTT domain; required for its function in autophagy region spans residues 118 to 229; that stretch reads GFLYPFPLAL…FVAIKAGTTL (112 aa).

The protein belongs to the TMEM41 family.

The protein resides in the endoplasmic reticulum membrane. The protein localises to the endomembrane system. It carries out the reaction a 1,2-diacyl-sn-glycero-3-phospho-L-serine(in) = a 1,2-diacyl-sn-glycero-3-phospho-L-serine(out). The catalysed reaction is cholesterol(in) = cholesterol(out). It catalyses the reaction a 1,2-diacyl-sn-glycero-3-phosphocholine(in) = a 1,2-diacyl-sn-glycero-3-phosphocholine(out). The enzyme catalyses a 1,2-diacyl-sn-glycero-3-phosphoethanolamine(in) = a 1,2-diacyl-sn-glycero-3-phosphoethanolamine(out). In terms of biological role, phospholipid scramblase involved in lipid homeostasis and membrane dynamics processes. Has phospholipid scramblase activity toward cholesterol and phosphatidylserine, as well as phosphatidylethanolamine and phosphatidylcholine. Required for autophagosome formation: participates in early stages of autophagosome biogenesis at the endoplasmic reticulum (ER) membrane by reequilibrating the leaflets of the ER as lipids are extracted by ATG2 (ATG2A or ATG2B) to mediate autophagosome assembly. In addition to autophagy, involved in other processes in which phospholipid scramblase activity is required. Required for normal motor neuron development. The sequence is that of Transmembrane protein 41B from Gallus gallus (Chicken).